Reading from the N-terminus, the 430-residue chain is mRNA cap guanine-N(7) methyltransferase (430 aa).

Residues 1–88 are disordered; sequence MALRPEKPVW…YDLEERKKKQ (88 aa). Residues 15–37 show a composition bias toward basic and acidic residues; it reads QYDRQYGKLEEPKPPREESKPGD. The mRNA cap 0 methyltransferase domain maps to 136–419; the sequence is SPIIKLRNFN…FYTVFAFRKV (284 aa). MRNA is bound at residue 145-146; sequence NN. Residues Lys149, Gly167, Asp189, Asp218, Gln244, and Tyr249 each coordinate S-adenosyl-L-methionine.

This sequence belongs to the class I-like SAM-binding methyltransferase superfamily. mRNA cap 0 methyltransferase family.

Its subcellular location is the nucleus. The catalysed reaction is a 5'-end (5'-triphosphoguanosine)-ribonucleoside in mRNA + S-adenosyl-L-methionine = a 5'-end (N(7)-methyl 5'-triphosphoguanosine)-ribonucleoside in mRNA + S-adenosyl-L-homocysteine. Its function is as follows. Responsible for methylating the 5'-cap structure of mRNAs. The protein is mRNA cap guanine-N(7) methyltransferase (ABD1) of Eremothecium gossypii (strain ATCC 10895 / CBS 109.51 / FGSC 9923 / NRRL Y-1056) (Yeast).